Reading from the N-terminus, the 382-residue chain is Glycerate kinase (382 aa).

It belongs to the glycerate kinase type-1 family.

It catalyses the reaction (R)-glycerate + ATP = (2R)-3-phosphoglycerate + ADP + H(+). The polypeptide is Glycerate kinase (glxK) (Bacillus subtilis (strain 168)).